The chain runs to 145 residues: Large ribosomal subunit protein uL24 (145 aa).

The tract at residues 108–145 (EPIQEEQQKTEETKQEIAPEEVEAKEAQDKQEVKENDQ) is disordered. Positions 113–145 (EQQKTEETKQEIAPEEVEAKEAQDKQEVKENDQ) are enriched in basic and acidic residues.

Belongs to the universal ribosomal protein uL24 family. In terms of assembly, part of the 50S ribosomal subunit.

One of two assembly initiator proteins, it binds directly to the 5'-end of the 23S rRNA, where it nucleates assembly of the 50S subunit. Functionally, located at the polypeptide exit tunnel on the outside of the subunit. The protein is Large ribosomal subunit protein uL24 (rpl24) of Thermoplasma volcanium (strain ATCC 51530 / DSM 4299 / JCM 9571 / NBRC 15438 / GSS1).